The primary structure comprises 180 residues: MASTISAYKEKMKELSVLSLICSCFYTQPHPNTIYQYGDMEVKQLDKRASGQSFEVILKSPSDLSPESPMLSSPPKKKDTSLEELQKRLEAAEERRKTQEAQVLKQLAERREHEREVLHKALEENNNFSRQAEEKLNYKMELSKEIREAHLAALRERLREKELHAAEVRRNKEQREEMSG.

2 S-palmitoyl cysteine lipidation sites follow: Cys-22 and Cys-24. The SLD domain occupies 38 to 180 (GDMEVKQLDK…NKEQREEMSG (143 aa)). A phosphoserine mark is found at Ser-50, Ser-60, Ser-65, Ser-68, Ser-72, Ser-73, and Ser-81. A disordered region spans residues 59–82 (KSPSDLSPESPMLSSPPKKKDTSL). Residues 60-74 (SPSDLSPESPMLSSP) show a composition bias toward low complexity. Positions 76–179 (KKKDTSLEEL…RNKEQREEMS (104 aa)) form a coiled coil.

It belongs to the stathmin family. As to quaternary structure, interacts with STAT3. Interacts with CLU (secreted form); this interaction may act as an important modulator during neuronal differentiation. N-terminal palmitoylation promotes specific anchoring to the cytosolic leaflet of Golgi membranes and subsequent vesicular trafficking along dendrites and axons. Neuronal Stathmins are substrates for palmitoyltransferases ZDHHC3, ZDHHC7 and ZDHHC15.

It localises to the golgi apparatus. The protein resides in the cell projection. It is found in the growth cone. The protein localises to the axon. Its subcellular location is the cytoplasm. It localises to the cytosol. Its function is as follows. Exhibits microtubule-destabilizing activity, which is antagonized by STAT3. The protein is Stathmin-3 (STMN3) of Macaca fascicularis (Crab-eating macaque).